A 92-amino-acid polypeptide reads, in one-letter code: 11 kDa excretory-secretory protein (92 aa).

The protein is 11 kDa excretory-secretory protein of Trichostrongylus colubriformis (Black scour worm).